A 292-amino-acid chain; its full sequence is Mitochondrial ornithine transporter 1 (292 aa).

Solcar repeat units follow at residues 11-97 (EGAI…CSKF), 105-196 (SPLG…VKKS), and 211-292 (SKIW…LSAL). Transmembrane regions (helical) follow at residues 14-34 (ILDI…EFPF), 69-89 (FFQG…TLFV), 104-124 (VSPL…ASLV), 171-187 (GQSG…VAWF), 213-233 (IWEL…SIFP), and 267-287 (GLGI…YIFE).

The protein belongs to the mitochondrial carrier (TC 2.A.29) family.

It localises to the mitochondrion inner membrane. Functionally, required for arginine biosynthesis. Transports ornithine synthesized from glutamate in the mitochondrial matrix to the cytosol, where it is converted to arginine. This is Mitochondrial ornithine transporter 1 (ORT1) from Saccharomyces cerevisiae (strain ATCC 204508 / S288c) (Baker's yeast).